Here is a 427-residue protein sequence, read N- to C-terminus: cAMP-dependent protein kinase regulatory subunit (427 aa).

Residues 38–184 (QFCSNFFIRK…RIKVSISNNF (147 aa)) are dimerization and phosphorylation. Residues 96 to 145 (TTHMGHPNDHGALHDDDDDPLEDEDDEEFDKFSTEPLPSLPPTNYNRGRR) form a disordered region. The span at 110–124 (DDDDDPLEDEDDEEF) shows a compositional bias: acidic residues. Ser-147 is subject to Phosphoserine. 3',5'-cyclic AMP-binding positions include 185-300 (LFRN…FLSE), Glu-250, Arg-259, 303-422 (LLKS…YHAV), Glu-372, and Arg-381.

It belongs to the cAMP-dependent kinase regulatory chain family. Tetramer, composed of 2 regulatory (R) and 2 catalytic (C) subunits. In the presence of cAMP it dissociates into 2 active monomeric C subunits and an R dimer.

This chain is cAMP-dependent protein kinase regulatory subunit (pkar), found in Mucor circinelloides f. lusitanicus (Mucor racemosus var. lusitanicus).